The primary structure comprises 49 residues: Large ribosomal subunit protein bL32 (49 aa).

The tract at residues 25-49 (AKPVKDKDGTYKLPHHINPTTGEYK) is disordered.

This sequence belongs to the bacterial ribosomal protein bL32 family.

The sequence is that of Large ribosomal subunit protein bL32 from Sulfurimonas denitrificans (strain ATCC 33889 / DSM 1251) (Thiomicrospira denitrificans (strain ATCC 33889 / DSM 1251)).